Reading from the N-terminus, the 236-residue chain is 7-cyano-7-deazaguanine synthase (236 aa).

7 to 17 lines the ATP pocket; that stretch reads CSGGLDSVSLA. Residues C185, C193, C196, and C199 each coordinate Zn(2+).

Belongs to the QueC family. It depends on Zn(2+) as a cofactor.

It carries out the reaction 7-carboxy-7-deazaguanine + NH4(+) + ATP = 7-cyano-7-deazaguanine + ADP + phosphate + H2O + H(+). Its pathway is purine metabolism; 7-cyano-7-deazaguanine biosynthesis. Functionally, catalyzes the ATP-dependent conversion of 7-carboxy-7-deazaguanine (CDG) to 7-cyano-7-deazaguanine (preQ(0)). In Rhizobium etli (strain CIAT 652), this protein is 7-cyano-7-deazaguanine synthase.